The following is a 634-amino-acid chain: Chaperone protein DnaK (634 aa).

Thr-197 is subject to Phosphothreonine; by autocatalysis. The interval 592-634 (IGSSVYQQPGNQPPAPGGPNANASDDKGPDDDVIDADFTETKD) is disordered. A compositionally biased stretch (acidic residues) spans 619 to 634 (GPDDDVIDADFTETKD).

Belongs to the heat shock protein 70 family.

Its function is as follows. Acts as a chaperone. The chain is Chaperone protein DnaK from Prochlorococcus marinus (strain MIT 9515).